We begin with the raw amino-acid sequence, 501 residues long: Ribose import ATP-binding protein RbsA (501 aa).

ABC transporter domains lie at 5–241 (LELK…VGRK) and 249–495 (LNLP…VGKQ). 37 to 44 (GENGAGKS) lines the ATP pocket.

This sequence belongs to the ABC transporter superfamily. Ribose importer (TC 3.A.1.2.1) family. As to quaternary structure, the complex is composed of an ATP-binding protein (RbsA), two transmembrane proteins (RbsC) and a solute-binding protein (RbsB).

The protein resides in the cell inner membrane. The catalysed reaction is D-ribose(out) + ATP + H2O = D-ribose(in) + ADP + phosphate + H(+). Functionally, part of the ABC transporter complex RbsABC involved in ribose import. Responsible for energy coupling to the transport system. The chain is Ribose import ATP-binding protein RbsA from Photorhabdus laumondii subsp. laumondii (strain DSM 15139 / CIP 105565 / TT01) (Photorhabdus luminescens subsp. laumondii).